Consider the following 141-residue polypeptide: Protein GAT3 (141 aa).

The GATA-type zinc finger occupies 72-98 (CPQCAVIKTSPQWREGPDGEVTLCNAC).

The sequence is that of Protein GAT3 (GAT3) from Saccharomyces cerevisiae (strain ATCC 204508 / S288c) (Baker's yeast).